The sequence spans 73 residues: Toxin Td5 (73 aa).

A signal peptide spans Ile1–Cys7. Positions Lys8 to Arg70 constitute an LCN-type CS-alpha/beta domain. 4 cysteine pairs are disulfide-bonded: Cys18–Cys69, Cys22–Cys44, Cys30–Cys50, and Cys34–Cys52. Arg70 is modified (arginine amide).

Belongs to the long (4 C-C) scorpion toxin superfamily. Sodium channel inhibitor family. Beta subfamily. In terms of tissue distribution, expressed by the venom gland.

It is found in the secreted. Its function is as follows. Beta toxins bind voltage-independently at site-4 of sodium channels (Nav) and shift the voltage of activation toward more negative potentials thereby affecting sodium channel activation and promoting spontaneous and repetitive firing. In Tityus discrepans (Venezuelan scorpion), this protein is Toxin Td5.